The chain runs to 136 residues: Protein PsiE homolog (136 aa).

Transmembrane regions (helical) follow at residues 15–35 (AMQT…IVFL), 58–78 (VEGL…VKYF), 83–103 (HFPL…LIII), and 108–128 (PMAV…LWLC).

Belongs to the PsiE family.

The protein localises to the cell inner membrane. The polypeptide is Protein PsiE homolog (Klebsiella pneumoniae (strain 342)).